The following is a 269-amino-acid chain: GTP cyclohydrolase FolE2 (269 aa).

This sequence belongs to the GTP cyclohydrolase IV family.

The enzyme catalyses GTP + H2O = 7,8-dihydroneopterin 3'-triphosphate + formate + H(+). Its pathway is cofactor biosynthesis; 7,8-dihydroneopterin triphosphate biosynthesis; 7,8-dihydroneopterin triphosphate from GTP: step 1/1. In terms of biological role, converts GTP to 7,8-dihydroneopterin triphosphate. In Burkholderia thailandensis (strain ATCC 700388 / DSM 13276 / CCUG 48851 / CIP 106301 / E264), this protein is GTP cyclohydrolase FolE2.